A 373-amino-acid chain; its full sequence is Flagellar P-ring protein (373 aa).

Residues 1–30 (MTNRWSFDVKKNLVTLILTWLCLSISTAQA) form the signal peptide.

This sequence belongs to the FlgI family. The basal body constitutes a major portion of the flagellar organelle and consists of four rings (L,P,S, and M) mounted on a central rod.

It is found in the periplasm. It localises to the bacterial flagellum basal body. Assembles around the rod to form the L-ring and probably protects the motor/basal body from shearing forces during rotation. The polypeptide is Flagellar P-ring protein (Aliivibrio salmonicida (strain LFI1238) (Vibrio salmonicida (strain LFI1238))).